The primary structure comprises 131 residues: MNPRRPYPVIFLCRPSSVASSKLASTFMISFLVKKTLSSNTVNSPRGTVRSISRIRNMVSLLLLPTIYIRSLVSYNVYLPITNLEVFLCLDPDVVSIPPPRVCSIASLFILVLFLFCFALRYYVSKLINFK.

The next 2 helical transmembrane spans lie at 61 to 81 (LLLL…YLPI) and 102 to 122 (VCSI…ALRY).

Its subcellular location is the membrane. This is an uncharacterized protein from Saccharomyces cerevisiae (strain ATCC 204508 / S288c) (Baker's yeast).